A 352-amino-acid polypeptide reads, in one-letter code: Selenide, water dikinase (352 aa).

The active site involves cysteine 23. ATP contacts are provided by residues lysine 26 and 54 to 56; that span reads SRD. Residue aspartate 57 coordinates Mg(2+). ATP contacts are provided by residues aspartate 74, aspartate 97, and 145–147; that span reads GHS. Aspartate 97 contributes to the Mg(2+) binding site. Aspartate 233 serves as a coordination point for Mg(2+).

The protein belongs to the selenophosphate synthase 1 family. Class I subfamily. Homodimer. The cofactor is Mg(2+).

It catalyses the reaction hydrogenselenide + ATP + H2O = selenophosphate + AMP + phosphate + 2 H(+). Its function is as follows. Synthesizes selenophosphate from selenide and ATP. The polypeptide is Selenide, water dikinase (Shewanella baltica (strain OS223)).